The chain runs to 232 residues: Zinc import ATP-binding protein ZnuC (232 aa).

In terms of domain architecture, ABC transporter spans 5–220 (VNLKNIFVFY…PSFIEMFGCY (216 aa)). Position 37–44 (37–44 (GPNGSGKS)) interacts with ATP.

Belongs to the ABC transporter superfamily. Zinc importer (TC 3.A.1.15.5) family. The complex is composed of two ATP-binding proteins (ZnuC), two transmembrane proteins (ZnuB) and a solute-binding protein (ZnuA).

It is found in the cell membrane. It carries out the reaction Zn(2+)(out) + ATP(in) + H2O(in) = Zn(2+)(in) + ADP(in) + phosphate(in) + H(+)(in). Part of the ABC transporter complex ZnuABC involved in zinc import. Responsible for energy coupling to the transport system. The polypeptide is Zinc import ATP-binding protein ZnuC (Wigglesworthia glossinidia brevipalpis).